The following is a 341-amino-acid chain: Basic membrane protein B (341 aa).

A signal peptide spans 1–14 (MRIVIFILGILLTS). Cysteine 15 is lipidated: N-palmitoyl cysteine. Cysteine 15 carries S-diacylglycerol cysteine lipidation.

The protein belongs to the BMP lipoprotein family. Monomer.

The protein resides in the cell inner membrane. Functionally, may be part of an ABC-type nucleoside uptake system involved in the purine salvage pathway. In Borrelia garinii subsp. bavariensis (strain ATCC BAA-2496 / DSM 23469 / PBi) (Borreliella bavariensis), this protein is Basic membrane protein B (bmpB).